The following is a 273-amino-acid chain: Kit ligand (273 aa).

An N-terminal signal peptide occupies residues 1–25 (MKKTQTWIITCIYLQLLLFNPLVKT). Residues 26–214 (KEICGNPVTD…AKAPEDSGLQ (189 aa)) are Extracellular-facing. 2 disulfides stabilise this stretch: C29–C114 and C68–C163. N-linked (GlcNAc...) asparagine glycans are attached at residues N90, N97, N145, and N195. Residues 190–210 (ASSLRNDSSSSNRKAAKAPED) form a disordered region. Residues 191–202 (SSLRNDSSSSNR) show a composition bias toward low complexity. Residues 215–237 (WTAMALPALISLVIGFAFGALYW) form a helical membrane-spanning segment. Over 238 to 273 (KKKQSSLTRAVENIQINEEDNEISMLQQKEREFQEV) the chain is Cytoplasmic.

Belongs to the SCF family. In terms of assembly, homodimer, non-covalently linked. Heterotetramer with KIT, binding two KIT molecules; thereby mediates KIT dimerization and subsequent activation by autophosphorylation. Post-translationally, a soluble form is produced by proteolytic processing of isoform 1 in the extracellular domain. As to expression, expressed in the cochlea.

The protein localises to the cell membrane. It is found in the cytoplasm. It localises to the cytoskeleton. The protein resides in the cell projection. Its subcellular location is the lamellipodium. The protein localises to the filopodium. It is found in the secreted. In terms of biological role, ligand for the receptor-type protein-tyrosine kinase KIT. Plays an essential role in the regulation of cell survival and proliferation, hematopoiesis, stem cell maintenance, gametogenesis, mast cell development, migration and function, and in melanogenesis. KITLG/SCF binding can activate several signaling pathways. Promotes phosphorylation of PIK3R1, the regulatory subunit of phosphatidylinositol 3-kinase, and subsequent activation of the kinase AKT1. KITLG/SCF and KIT also transmit signals via GRB2 and activation of RAS, RAF1 and the MAP kinases MAPK1/ERK2 and/or MAPK3/ERK1. KITLG/SCF and KIT promote activation of STAT family members STAT1, STAT3 and STAT5. KITLG/SCF and KIT promote activation of PLCG1, leading to the production of the cellular signaling molecules diacylglycerol and inositol 1,4,5-trisphosphate. KITLG/SCF acts synergistically with other cytokines, probably interleukins. The protein is Kit ligand (Kitlg) of Mus musculus (Mouse).